A 317-amino-acid chain; its full sequence is Type II methyltransferase M.MgeORF184P (317 aa).

Belongs to the N(4)/N(6)-methyltransferase family.

The catalysed reaction is a 2'-deoxyadenosine in DNA + S-adenosyl-L-methionine = an N(6)-methyl-2'-deoxyadenosine in DNA + S-adenosyl-L-homocysteine + H(+). Its function is as follows. Probably recognizes the double-stranded sequence 5'-CTAT-3' and methylates A-3 on only one strand; as the bacterial DNA is methylated on this sequence and this is the only type II methylase in the genome, it is probably responsible for all of the methylation on this site in the genome. The protein is Type II methyltransferase M.MgeORF184P of Mycoplasma genitalium (strain ATCC 33530 / DSM 19775 / NCTC 10195 / G37) (Mycoplasmoides genitalium).